A 142-amino-acid polypeptide reads, in one-letter code: uncharacterized protein (142 aa).

It belongs to the IIV-3 015R family.

This is an uncharacterized protein from Aedes vexans (Inland floodwater mosquito).